Reading from the N-terminus, the 456-residue chain is Cysteine--tRNA ligase (456 aa).

Cys29 contacts Zn(2+). The short motif at 31 to 41 (VTVYDYCHVGH) is the 'HIGH' region element. Cys210, His235, and Glu239 together coordinate Zn(2+). Residues 267 to 271 (KMSKS) carry the 'KMSKS' region motif. Lys270 lines the ATP pocket.

It belongs to the class-I aminoacyl-tRNA synthetase family. Monomer. Zn(2+) is required as a cofactor.

It is found in the cytoplasm. It carries out the reaction tRNA(Cys) + L-cysteine + ATP = L-cysteinyl-tRNA(Cys) + AMP + diphosphate. The protein is Cysteine--tRNA ligase of Hydrogenovibrio crunogenus (strain DSM 25203 / XCL-2) (Thiomicrospira crunogena).